A 500-amino-acid polypeptide reads, in one-letter code: L-arabinose isomerase (500 aa).

Residues Glu306, Glu333, His350, and His450 each coordinate Mn(2+).

It belongs to the arabinose isomerase family. In terms of assembly, homohexamer. Mn(2+) is required as a cofactor.

The enzyme catalyses beta-L-arabinopyranose = L-ribulose. It functions in the pathway carbohydrate degradation; L-arabinose degradation via L-ribulose; D-xylulose 5-phosphate from L-arabinose (bacterial route): step 1/3. Its function is as follows. Catalyzes the conversion of L-arabinose to L-ribulose. This chain is L-arabinose isomerase, found in Salmonella enteritidis PT4 (strain P125109).